A 323-amino-acid chain; its full sequence is tRNA U34 carboxymethyltransferase (323 aa).

Residues Lys91, Trp105, Lys110, Gly130, 152–154 (DPT), 181–182 (IE), Met196, Tyr200, and Arg315 each bind carboxy-S-adenosyl-L-methionine.

It belongs to the class I-like SAM-binding methyltransferase superfamily. CmoB family. Homotetramer.

The enzyme catalyses carboxy-S-adenosyl-L-methionine + 5-hydroxyuridine(34) in tRNA = 5-carboxymethoxyuridine(34) in tRNA + S-adenosyl-L-homocysteine + H(+). In terms of biological role, catalyzes carboxymethyl transfer from carboxy-S-adenosyl-L-methionine (Cx-SAM) to 5-hydroxyuridine (ho5U) to form 5-carboxymethoxyuridine (cmo5U) at position 34 in tRNAs. The polypeptide is tRNA U34 carboxymethyltransferase (Salmonella typhimurium (strain LT2 / SGSC1412 / ATCC 700720)).